We begin with the raw amino-acid sequence, 118 residues long: Large ribosomal subunit protein uL18 (118 aa).

It belongs to the universal ribosomal protein uL18 family. Part of the 50S ribosomal subunit; part of the 5S rRNA/L5/L18/L25 subcomplex. Contacts the 5S and 23S rRNAs.

Its function is as follows. This is one of the proteins that bind and probably mediate the attachment of the 5S RNA into the large ribosomal subunit, where it forms part of the central protuberance. The sequence is that of Large ribosomal subunit protein uL18 from Helicobacter pylori (strain J99 / ATCC 700824) (Campylobacter pylori J99).